Reading from the N-terminus, the 1058-residue chain is Ubiquitin-like modifier-activating enzyme 1 Y (1058 aa).

The disordered stretch occupies residues 1–22 (MSSSVLSKKRKVSGPDSSLDSS). ATP-binding positions include Ala477, Asp503, Arg514, Lys527, and 575 to 576 (DN). Residue Cys631 is the Glycyl thioester intermediate of the active site.

The protein belongs to the ubiquitin-activating E1 family. Monomer. In terms of tissue distribution, expressed in testis in A spermatogonia and spermatids but not (or at very low levels) in pachytene spermatocytes. Also expressed in Y-bearing ovaries and at very low levels in adrenal gland.

The catalysed reaction is ATP + ubiquitin + [E1 ubiquitin-activating enzyme]-L-cysteine = AMP + diphosphate + S-ubiquitinyl-[E1 ubiquitin-activating enzyme]-L-cysteine.. The protein operates within protein modification; protein ubiquitination. Functionally, activates ubiquitin by first adenylating its C-terminal glycine residue with ATP, and thereafter linking this residue to the side chain of a cysteine residue in E1, yielding a ubiquitin-E1 thioester and free AMP. The Y chromosome form could be involved in the survival and proliferation of differentiating spermatogonia. This chain is Ubiquitin-like modifier-activating enzyme 1 Y (Uba1y), found in Mus musculus (Mouse).